The following is a 245-amino-acid chain: Biosynthetic peptidoglycan transglycosylase (245 aa).

The chain crosses the membrane as a helical span at residues 20–42; sequence VYAGSVFAGAWLATQLFYLVQIA.

Belongs to the glycosyltransferase 51 family.

Its subcellular location is the cell inner membrane. The catalysed reaction is [GlcNAc-(1-&gt;4)-Mur2Ac(oyl-L-Ala-gamma-D-Glu-L-Lys-D-Ala-D-Ala)](n)-di-trans,octa-cis-undecaprenyl diphosphate + beta-D-GlcNAc-(1-&gt;4)-Mur2Ac(oyl-L-Ala-gamma-D-Glu-L-Lys-D-Ala-D-Ala)-di-trans,octa-cis-undecaprenyl diphosphate = [GlcNAc-(1-&gt;4)-Mur2Ac(oyl-L-Ala-gamma-D-Glu-L-Lys-D-Ala-D-Ala)](n+1)-di-trans,octa-cis-undecaprenyl diphosphate + di-trans,octa-cis-undecaprenyl diphosphate + H(+). The protein operates within cell wall biogenesis; peptidoglycan biosynthesis. Its function is as follows. Peptidoglycan polymerase that catalyzes glycan chain elongation from lipid-linked precursors. The sequence is that of Biosynthetic peptidoglycan transglycosylase from Burkholderia ambifaria (strain MC40-6).